The chain runs to 230 residues: UPF0173 metal-dependent hydrolase RHOS4_08540 (230 aa).

The protein belongs to the UPF0173 family.

The protein is UPF0173 metal-dependent hydrolase RHOS4_08540 of Cereibacter sphaeroides (strain ATCC 17023 / DSM 158 / JCM 6121 / CCUG 31486 / LMG 2827 / NBRC 12203 / NCIMB 8253 / ATH 2.4.1.) (Rhodobacter sphaeroides).